The sequence spans 449 residues: POU domain, class 5, transcription factor 1.1 (449 aa).

2 disordered regions span residues Glu79–Asn125 and Tyr170–Ser233. Residues Ser97–Asp110 are compositionally biased toward basic and acidic residues. Residues Tyr170 to Thr180 are compositionally biased toward polar residues. Positions Ser187–Ser199 are enriched in low complexity. Acidic residues predominate over residues Asp224–Ser233. A POU-specific domain is found at Glu227 to Glu301. The homeobox DNA-binding region spans Lys321–Gly380.

The protein belongs to the POU transcription factor family. Class-5 subfamily. Interacts with components of the transcription complex that assembles on the vent2-B gene, including vent2 (via C-terminus), smad1 and smad4. Forms a repression complex on the promoters of the gsc and mix2 genes via interactions with the nodal/activin signaling pathway transducers foxh1/fast1, gtf2ird1/wbscr11 and smad2. Forms a repression complex on the promoters of the nodal/nr1 and siamois genes with the maternal factors tcf7l1/tcf3 and vegt. As to expression, highly enriched within the animal half of developing embryos within ectodermal and mesodermal regions. Expressed in the neuroectoderm at the early neurula stage, with expression initially extending to the future hindbrain/midbrain boundary, but later shifting toward the posterior pole where it persists within the tip of the tail in hatching embryos. Expressed at very low levels in the adult kidney.

Its subcellular location is the nucleus. Functionally, transcription factor that binds to the octamer motif (5'-ATTTGCAT-3'). Activates transcription when directly bound to the octamer DNA sequence, but can form repression complexes with other proteins at the promoter site to inhibit transcription. Binds to the promoter of the vent2-B gene to activate transcription when in the presence of other BMP signaling factors also bound to the promoter. Inhibits the competence of ectodermal cells to respond to BMP during embryogenesis thereby inhibiting epidermal differentiation and promoting neural induction. Antagonizes the activity of nodal/activin signaling by forming a transcriptional repression complex on the gsc and mix2 gene promoters to inhibit their transcription, and thus maintain the undifferentiated state of embryonic cells to prevent them from differentiating prematurely. Acts maternally to inhibit vegt and beta-catenin-activated gene transcription by forming a transcriptional repression complex on the nodal/nr1 and siamois promoters to inhibit their transcription. The protein is POU domain, class 5, transcription factor 1.1 (pou5f1.1) of Xenopus laevis (African clawed frog).